Here is a 120-residue protein sequence, read N- to C-terminus: Prophage bactoprenol-linked glucose translocase homolog (120 aa).

Over 1-9 (MLKLFAKYT) the chain is Cytoplasmic. A helical transmembrane segment spans residues 10–30 (SIGVLNTLIHWVVFGVCIYVA). Over 31 to 33 (HTN) the chain is Periplasmic. A helical transmembrane segment spans residues 34–54 (QALANFAGFVVAVSFSFFANA). The Cytoplasmic segment spans residues 55-64 (KFTFKASTTT). Residues 65-85 (MRYMLYVGFMGTLSATVGWAA) traverse the membrane as a helical segment. Residues 86 to 88 (DRC) lie on the Periplasmic side of the membrane. Residues 89 to 109 (ALPPMITLVTFSAISLVCGFV) form a helical membrane-spanning segment. At 110-120 (YSKFIVFRDAK) the chain is on the cytoplasmic side.

The protein belongs to the GtrA family.

The protein localises to the cell inner membrane. Involved in O antigen modification. Involved in the translocation of bactoprenol-linked glucose across the cytoplasmic membrane. In Escherichia coli (strain K12), this protein is Prophage bactoprenol-linked glucose translocase homolog (yfdG).